The chain runs to 1451 residues: Glutamate receptor ionotropic, NMDA 2A (1451 aa).

Residues methionine 1 to glycine 20 form the signal peptide. Topologically, residues alanine 21–alanine 547 are extracellular. Asparagine 67 carries an N-linked (GlcNAc...) asparagine glycan. Cysteine 79 and cysteine 312 form a disulfide bridge. The Zn(2+) site is built by histidine 120, aspartate 258, and aspartate 274. 4 N-linked (GlcNAc...) asparagine glycosylation sites follow: asparagine 332, asparagine 372, asparagine 435, and asparagine 436. Disulfide bonds link cysteine 421–cysteine 447 and cysteine 428–cysteine 448. 3 residues coordinate L-glutamate: serine 503, threonine 505, and arginine 510. A glycan (N-linked (GlcNAc...) asparagine) is linked at asparagine 533. Residues serine 548–phenylalanine 568 traverse the membrane as a helical segment. The Cytoplasmic portion of the chain corresponds to glutamate 569 to threonine 592. The segment at phenylalanine 591–glutamine 612 is pore-forming. The discontinuously helical intramembrane region spans isoleucine 593–glutamine 612. At asparagine 613–threonine 617 the chain is on the cytoplasmic side. Residues threonine 618 to tyrosine 637 traverse the membrane as a helical segment. Topologically, residues threonine 638–asparagine 808 are extracellular. The N-linked (GlcNAc...) asparagine glycan is linked to asparagine 679. Positions 681, 682, and 723 each coordinate L-glutamate. Cysteine 737 and cysteine 792 are disulfide-bonded. A helical transmembrane segment spans residues methionine 809–tryptophan 829. Residues glutamate 830 to valine 1451 are Cytoplasmic-facing. Over residues threonine 1011–asparagine 1022 the composition is skewed to polar residues. Disordered stretches follow at residues threonine 1011–lysine 1080 and asparagine 1100–proline 1165. Composition is skewed to basic and acidic residues over residues cysteine 1055–lysine 1073, asparagine 1100–proline 1113, and tyrosine 1138–glutamate 1149.

This sequence belongs to the glutamate-gated ion channel (TC 1.A.10.1) family. Heterotetramer. Forms heterotetrameric channels composed of two GluN1/zeta subunits (GRIN1), and two identical GluN2/epsilon subunits (GRIN2A, GRIN2B, GRIN2C or GRIN2D) or GluN3 subunits (GRIN3A or GRIN3B) (in vitro). In vivo, the subunit composition may depend on the expression levels of the different subunits.

It is found in the cell membrane. The protein localises to the postsynaptic cell membrane. The enzyme catalyses Ca(2+)(in) = Ca(2+)(out). It carries out the reaction Na(+)(in) = Na(+)(out). It catalyses the reaction K(+)(in) = K(+)(out). Component of N-methyl-D-aspartate (NMDA) receptors (NMDARs) that function as heterotetrameric, ligand-gated cation channels with high calcium permeability and voltage-dependent block by Mg(2+). MDARs participate in synaptic plasticity. Channel activation requires binding of the neurotransmitter L-glutamate to the GluN2 subunit, glycine binding to the GluN1 subunit, plus membrane depolarization to eliminate channel inhibition by Mg(2+). NMDARs mediate simultaneously the potasium efflux and the influx of calcium and sodium. Each GluN2 subunit confers differential attributes to channel properties, including activation, deactivation and desensitization kinetics, pH sensitivity, Ca2(+) permeability, and binding to allosteric modulators. Plays a role in dendritic branching in brain neurons and in synaptic plasticity. This Xenopus laevis (African clawed frog) protein is Glutamate receptor ionotropic, NMDA 2A.